The following is a 677-amino-acid chain: Pentatricopeptide repeat-containing protein At5g39350 (677 aa).

PPR repeat units follow at residues 48–78, 79–113, 116–146, 151–181, 182–216, 217–251, 252–282, 283–317, 318–352, 353–383, 384–418, 419–453, 454–488, 489–523, 524–554, and 560–590; these read SGHILSTLSVTYALCGHITYARKLFEEMPQS, SLLSYNIVIRMYVREGLYHDAISVFIRMVSEGVKC, DGYTYPFVAKAAGELKSMKLGLVVHGRILRS, DKYVQNALLAMYMNFGKVEMARDVFDVMKNR, DVISWNTMISGYYRNGYMNDALMMFDWMVNESVDL, DHATIVSMLPVCGHLKDLEMGRNVHKLVEEKRLGD, KIEVKNALVNMYLKCGRMDEARFVFDRMERR, DVITWTCMINGYTEDGDVENALELCRLMQFEGVRP, NAVTIASLVSVCGDALKVNDGKCLHGWAVRQQVYS, DIIIETSLISMYAKCKRVDLCFRVFSGASKY, HTGPWSAIIAGCVQNELVSDALGLFKRMRREDVEP, NIATLNSLLPAYAALADLRQAMNIHCYLTKTGFMS, SLDAATGLVHVYSKCGTLESAHKIFNGIQEKHKSK, DVVLWGALISGYGMHGDGHNALQVFMEMVRSGVTP, NEITFTSALNACSHSGLVEEGLTLFRFMLEH, and RSNHYTCIVDLLGRAGRLDEAYNLITTIPFE. The type E motif stretch occupies residues 595–670; that stretch reads VWGALLAACV…KPGHSTIEIR (76 aa).

It belongs to the PPR family. PCMP-E subfamily.

The chain is Pentatricopeptide repeat-containing protein At5g39350 (PCMP-E16) from Arabidopsis thaliana (Mouse-ear cress).